A 1144-amino-acid polypeptide reads, in one-letter code: ATP-dependent helicase/deoxyribonuclease subunit B (1144 aa).

Positions 1–276 (MAIRYVFGRA…IDLDRNERPV (276 aa)) constitute a UvrD-like helicase ATP-binding domain. 8-15 (GRAGRGKS) is an ATP binding site. Residues 274–584 (RPVLPKVQEI…LVGSIERSKS (311 aa)) form the UvrD-like helicase C-terminal domain. Residues cysteine 784, cysteine 1102, cysteine 1105, and cysteine 1111 each coordinate [4Fe-4S] cluster.

The protein belongs to the helicase family. AddB/RexB type 1 subfamily. Heterodimer of AddA and AddB. The cofactor is Mg(2+). It depends on [4Fe-4S] cluster as a cofactor.

Its function is as follows. The heterodimer acts as both an ATP-dependent DNA helicase and an ATP-dependent, dual-direction single-stranded exonuclease. Recognizes the chi site generating a DNA molecule suitable for the initiation of homologous recombination. The AddB subunit has 5' -&gt; 3' nuclease activity but not helicase activity. This Alkaliphilus oremlandii (strain OhILAs) (Clostridium oremlandii (strain OhILAs)) protein is ATP-dependent helicase/deoxyribonuclease subunit B.